The following is a 361-amino-acid chain: Histidinol-phosphate aminotransferase (361 aa).

K218 is subject to N6-(pyridoxal phosphate)lysine.

This sequence belongs to the class-II pyridoxal-phosphate-dependent aminotransferase family. Histidinol-phosphate aminotransferase subfamily. In terms of assembly, homodimer. Pyridoxal 5'-phosphate is required as a cofactor.

The enzyme catalyses L-histidinol phosphate + 2-oxoglutarate = 3-(imidazol-4-yl)-2-oxopropyl phosphate + L-glutamate. It functions in the pathway amino-acid biosynthesis; L-histidine biosynthesis; L-histidine from 5-phospho-alpha-D-ribose 1-diphosphate: step 7/9. The sequence is that of Histidinol-phosphate aminotransferase from Dinoroseobacter shibae (strain DSM 16493 / NCIMB 14021 / DFL 12).